We begin with the raw amino-acid sequence, 307 residues long: Oxygen-dependent coproporphyrinogen-III oxidase (307 aa).

Ser-97 contacts substrate. His-101 and His-111 together coordinate a divalent metal cation. His-111 (proton donor) is an active-site residue. 113 to 115 serves as a coordination point for substrate; the sequence is NVR. His-152 and His-182 together coordinate a divalent metal cation. Residues 247 to 282 are important for dimerization; sequence YVEFNLVWDRGTHFGLQSGGRTESILMSMPPLASWS. 265 to 267 contributes to the substrate binding site; sequence GGR.

Belongs to the aerobic coproporphyrinogen-III oxidase family. In terms of assembly, homodimer. It depends on a divalent metal cation as a cofactor.

The protein localises to the cytoplasm. The enzyme catalyses coproporphyrinogen III + O2 + 2 H(+) = protoporphyrinogen IX + 2 CO2 + 2 H2O. It participates in porphyrin-containing compound metabolism; protoporphyrin-IX biosynthesis; protoporphyrinogen-IX from coproporphyrinogen-III (O2 route): step 1/1. Involved in the heme biosynthesis. Catalyzes the aerobic oxidative decarboxylation of propionate groups of rings A and B of coproporphyrinogen-III to yield the vinyl groups in protoporphyrinogen-IX. The chain is Oxygen-dependent coproporphyrinogen-III oxidase from Polaromonas naphthalenivorans (strain CJ2).